The sequence spans 101 residues: Small ribosomal subunit protein bS18c (101 aa).

Basic residues predominate over residues 1-19; that stretch reads MNKSKRPFTKSKRSFRRRL. The segment at 1–20 is disordered; that stretch reads MNKSKRPFTKSKRSFRRRLP.

It belongs to the bacterial ribosomal protein bS18 family. In terms of assembly, part of the 30S ribosomal subunit.

It is found in the plastid. It localises to the chloroplast. This is Small ribosomal subunit protein bS18c from Arabis hirsuta (Hairy rock-cress).